We begin with the raw amino-acid sequence, 292 residues long: MNKRFESIGLVGHPRHPAALATHEMLFHWLTGKGYPVIVERQIARDLKLQHALTGTLADIGQQADLAVVVGGDGNMLGAARILARYDVDVIGVNRGNLGFLTDLDPDNAKQQLSCVLEGEYSRERRFLLEVKVCRDGQMHRRSTAINEVVLHPGKVAHMIEFEVYINDTFAFSQRSDGLIISTPTGSTAYSLSAGGPILAPTLDAIALVPMFPHTLSARPLVIDSNSKIHLRFSHFSNELEISCDSQIALPIQQGEEVIVQRSPFYLSLIHPKDYSYFNTLSSKLGWSKKLF.

D73 (proton acceptor) is an active-site residue. NAD(+) is bound by residues 73-74 (DG), 147-148 (NE), H158, R175, D177, 188-193 (TAYSLS), and Q247.

This sequence belongs to the NAD kinase family. The cofactor is a divalent metal cation.

The protein localises to the cytoplasm. The enzyme catalyses NAD(+) + ATP = ADP + NADP(+) + H(+). Functionally, involved in the regulation of the intracellular balance of NAD and NADP, and is a key enzyme in the biosynthesis of NADP. Catalyzes specifically the phosphorylation on 2'-hydroxyl of the adenosine moiety of NAD to yield NADP. The chain is NAD kinase from Edwardsiella ictaluri (strain 93-146).